The chain runs to 518 residues: MASNDYTQQATQSYGAYPTQPGQGYSQQSSQPYGQQSYSGYGQSADTSGYGQSSYGSSYGQTQNTGYGTQSAPQGYGSTGGYGSSQSSQSSYGQQSSYPGYGQQPAPSSTSGSYGGSSQSSSYGQPQSGGYGQQSGYGGQQQSYGQQQSSYNPPQGYGQQNQYNSSSGGGGGGGGGNYGQDQSSMSGGGGGGGYGNQDQSGGGGGGYGGGQQDRGGRGRGGGGGYNRSSGGYEPRGRGGGRGGRGGMGGSDRGGFNKFGGPRDQGSRHDSEQDNSDNNTIFVQGLGENVTIESVADYFKQIGIIKTNKKTGQPMINLYTDRETGKLKGEATVSFDDPPSAKAAIDWFDGKEFSGNPIKVSFATRRADFNRGGGNGRGGRGRGGPMGRGGYGGGGSGGGGRGGFPSGGGGGGGQQRAGDWKCPNPTCENMNFSWRNECNQCKAPKPDGPGGGPGGSHMGGNYGDDRRGRGGYDRGGYRGRGGDRGGFRGGRGGGDRGGFGPGKMDSRGEHRQDRRERPY.

Polar residues predominate over residues 1–14; the sequence is MASNDYTQQATQSY. The interval 1 to 279 is disordered; the sequence is MASNDYTQQA…SEQDNSDNNT (279 aa). 3 stretches are compositionally biased toward low complexity: residues 20–63, 84–105, and 116–126; these read QPGQ…GQTQ, SSQS…GQQP, and GSSQSSSYGQP. Residues 127-139 are compositionally biased toward gly residues; the sequence is QSGGYGQQSGYGG. Residues 140-166 are compositionally biased toward low complexity; that stretch reads QQQSYGQQQSSYNPPQGYGQQNQYNSS. Gly residues-rich tracts occupy residues 167–178 and 186–225; these read SGGGGGGGGGNY and SGGG…GGGY. Asymmetric dimethylarginine; alternate occurs at positions 217 and 219. Residues R217 and R219 each carry the omega-N-methylarginine; alternate modification. R235, R237, R241, R244, and R252 each carry asymmetric dimethylarginine. Over residues 237 to 252 the composition is skewed to gly residues; sequence RGGGRGGRGGMGGSDR. A Phosphoserine modification is found at S270. One can recognise an RRM domain in the interval 278–364; sequence NTIFVQGLGE…NPIKVSFATR (87 aa). The residue at position 279 (T279) is a Phosphothreonine. K327 is covalently cross-linked (Glycyl lysine isopeptide (Lys-Gly) (interchain with G-Cter in SUMO2)). S333 is subject to Phosphoserine. 2 disordered regions span residues 368–417 and 437–518; these read FNRG…QRAG and CNQC…ERPY. 5 positions are modified to asymmetric dimethylarginine: R370, R376, R379, R381, and R387. Residues 370-414 show a composition bias toward gly residues; the sequence is RGGGNGRGGRGRGGPMGRGGYGGGGSGGGGRGGFPSGGGGGGGQQ. R400 bears the Asymmetric dimethylarginine; alternate mark. An Omega-N-methylarginine; alternate modification is found at R400. The RanBP2-type zinc-finger motif lies at 415-446; sequence RAGDWKCPNPTCENMNFSWRNECNQCKAPKPD. Residues 447–461 show a composition bias toward gly residues; that stretch reads GPGGGPGGSHMGGNY. Positions 462–485 are enriched in basic and acidic residues; the sequence is GDDRRGRGGYDRGGYRGRGGDRGG. 8 positions are modified to asymmetric dimethylarginine: R466, R468, R473, R477, R479, R483, R487, and R490. The segment covering 486-500 has biased composition (gly residues); the sequence is FRGGRGGGDRGGFGP. At R495 the chain carries Asymmetric dimethylarginine; alternate. Residue R495 is modified to Omega-N-methylarginine; alternate. Over residues 503 to 518 the composition is skewed to basic and acidic residues; the sequence is MDSRGEHRQDRRERPY.

The protein belongs to the RRM TET family. As to quaternary structure, self-oligomerizes (via N-terminal region). Oligomerization is essential for chromatin binding. Component of nuclear riboprotein complexes. Interacts with ILF3, TDRD3 and SF1. Interacts through its C-terminus with SFRS13A. Interacts with OTUB1 and SARNP. Interacts with LRSAM1. Interacts with SAFB1 in a DNA-dependent manner; this interaction tethers FUS to chromatin. Interacts with MATR3. Interacts with SNRNP70 and POLR2A; these interactions couple RNA transcription and splicing. Interacts (through its RNA-binding domain) with RALY (through its RNA-binding domain); both are components of the same RNPs. Phosphorylated in its N-terminal serine residues upon induced DNA damage. ATM and DNA-PK are able to phosphorylate FUS N-terminal region.

It localises to the nucleus. In terms of biological role, DNA/RNA-binding protein that plays a role in various cellular processes such as transcription regulation, RNA splicing, RNA transport, DNA repair and damage response. Binds to ssRNA containing the consensus sequence 5'-AGGUAA-3'. Binds to nascent pre-mRNAs and acts as a molecular mediator between RNA polymerase II and U1 small nuclear ribonucleoprotein thereby coupling transcription and splicing. Also binds its own pre-mRNA and autoregulates its expression; this autoregulation mechanism is mediated by non-sense-mediated decay. Plays a role in DNA repair mechanisms by promoting D-loop formation and homologous recombination during DNA double-strand break repair. In neuronal cells, plays crucial roles in dendritic spine formation and stability, RNA transport, mRNA stability and synaptic homeostasis. The sequence is that of RNA-binding protein FUS (Fus) from Mus musculus (Mouse).